Consider the following 145-residue polypeptide: D-aminoacyl-tRNA deacylase (145 aa).

The short motif at 137-138 (GP) is the Gly-cisPro motif, important for rejection of L-amino acids element.

Belongs to the DTD family. As to quaternary structure, homodimer.

It is found in the cytoplasm. The enzyme catalyses glycyl-tRNA(Ala) + H2O = tRNA(Ala) + glycine + H(+). The catalysed reaction is a D-aminoacyl-tRNA + H2O = a tRNA + a D-alpha-amino acid + H(+). An aminoacyl-tRNA editing enzyme that deacylates mischarged D-aminoacyl-tRNAs. Also deacylates mischarged glycyl-tRNA(Ala), protecting cells against glycine mischarging by AlaRS. Acts via tRNA-based rather than protein-based catalysis; rejects L-amino acids rather than detecting D-amino acids in the active site. By recycling D-aminoacyl-tRNA to D-amino acids and free tRNA molecules, this enzyme counteracts the toxicity associated with the formation of D-aminoacyl-tRNA entities in vivo and helps enforce protein L-homochirality. The chain is D-aminoacyl-tRNA deacylase from Pseudomonas fluorescens (strain ATCC BAA-477 / NRRL B-23932 / Pf-5).